A 295-amino-acid polypeptide reads, in one-letter code: Bifunctional protein FolD (295 aa).

Residues 166–168 (GRS), S191, and I232 each bind NADP(+).

Belongs to the tetrahydrofolate dehydrogenase/cyclohydrolase family. In terms of assembly, homodimer.

The catalysed reaction is (6R)-5,10-methylene-5,6,7,8-tetrahydrofolate + NADP(+) = (6R)-5,10-methenyltetrahydrofolate + NADPH. It catalyses the reaction (6R)-5,10-methenyltetrahydrofolate + H2O = (6R)-10-formyltetrahydrofolate + H(+). The protein operates within one-carbon metabolism; tetrahydrofolate interconversion. Functionally, catalyzes the oxidation of 5,10-methylenetetrahydrofolate to 5,10-methenyltetrahydrofolate and then the hydrolysis of 5,10-methenyltetrahydrofolate to 10-formyltetrahydrofolate. This Rhodopseudomonas palustris (strain HaA2) protein is Bifunctional protein FolD.